The following is a 209-amino-acid chain: Probable spore germination lipoprotein YlaJ (209 aa).

The signal sequence occupies residues M1–A16. A lipid anchor (N-palmitoyl cysteine) is attached at C17. C17 is lipidated: S-diacylglycerol cysteine. 2 disordered regions span residues Q26–G54 and N165–D209. Basic and acidic residues-rich tracts occupy residues V28–G54 and L183–D209.

The protein localises to the forespore inner membrane. Its function is as follows. Probably contributes, directly or indirectly, to early events in germination. This is Probable spore germination lipoprotein YlaJ (ylaJ) from Bacillus subtilis (strain 168).